The chain runs to 655 residues: MGIFSIANQHIRFAVKLATAIVLALFVGFHFQLETPRWAVLTAAIVAAGPAFAAGGEPYSGAIRYRGFLRIIGTFIGCIAGLVIIIAMIRAPLLMILVCCIWAGFCTWISSLVRIENSYAWGLAGYTALIIVITIQPEPLLTPQFAVERCSEIVIGIVCAIMADLLFSPRSIKQEVDRELESLLVAQYQLMQLCIKHGDGEVVDKAWGDLVRRTTALQGMRSNLNMESSRWARANRRLKAINTLSLTLITQSCETYLIQNTRPELITDTFREFFDTPVETAQDVHKQLKRLRRVIAWTGERETPVTIYSWVAAATRYQLLKRGVISNTKINATEEEILQGEPEVKVESAERHHAMVNFWRTTLSCILGTLFWLWTGWTSGSGAMVMIAVVTSLAMRLPNPRMVAIDFIYGTLAALPLGLLYFLVIIPNTQQSMLLLCISLAVLGFFLGIEVQKRRLGSMGALASTINIIVLDNPMTFHFSQFLDSALGQIVGCVLAFTVILLVRDKSRDRTGRVLLNQFVSAAVSAMTTNVARRKENHLPALYQQLFLLMNKFPGDLPKFRLALTMIIAHQRLRDAPIPINEDLSAFHRQMRRTADHVISARSDDKRRRYFGQLLEELEIYQEKLRIWQAPPQVTEPVHRLAGMLHKYQHALTDS.

Helical transmembrane passes span 13 to 33 (FAVKLATAIVLALFVGFHFQL), 38 to 58 (WAVLTAAIVAAGPAFAAGGEP), 69 to 89 (LRIIGTFIGCIAGLVIIIAMI), 93 to 113 (LLMILVCCIWAGFCTWISSLV), 121 to 141 (WGLAGYTALIIVITIQPEPLL), 152 to 172 (EIVIGIVCAIMADLLFSPRSI), 370 to 390 (LFWLWTGWTSGSGAMVMIAVV), 407 to 427 (FIYGTLAALPLGLLYFLVIIP), 431 to 451 (QSMLLLCISLAVLGFFLGIEV), 459 to 479 (MGALASTINIIVLDNPMTFHF), and 482 to 502 (FLDSALGQIVGCVLAFTVILL).

Belongs to the aromatic acid exporter ArAE (TC 2.A.85) family.

Its subcellular location is the cell inner membrane. Its function is as follows. Forms an efflux pump with AaeA. Could function as a metabolic relief valve, allowing to eliminate certain compounds when they accumulate to high levels in the cell. This Escherichia coli O81 (strain ED1a) protein is p-hydroxybenzoic acid efflux pump subunit AaeB.